We begin with the raw amino-acid sequence, 947 residues long: MAVMEMACPGAPGSAVGQQKELPKAKEKTPPLGKKQSSVYKLEAVEKSPVFCGKWEILNDVITKGTAKEGSEAGPAAISIIAQAECENSQEFSPTFSERIFIAGSKQYSQSESLDQIPNNVAHATEGKMARVCWKGKRRSKARKKRKKKSSKSLAHAGVALAKPLPRTPEQESCTIPVQEDESPLGAPYVRNTPQFTKPLKEPGLGQLCFKQLGEGLRPALPRSELHKLISPLQCLNHVWKLHHPQDGGPLPLPTHPFPYSRLPHPFPFHPLQPWKPHPLESFLGKLACVDSQKPLPDPHLSKLACVDSPKPLPGPHLEPSCLSRGAHEKFSVEEYLVHALQGSVSSGQAHSLTSLAKTWAARGSRSREPSPKTEDNEGVLLTEKLKPVDYEYREEVHWATHQLRLGRGSFGEVHRMEDKQTGFQCAVKKVRLEVFRAEELMACAGLTSPRIVPLYGAVREGPWVNIFMELLEGGSLGQLVKEQGCLPEDRALYYLGQALEGLEYLHSRRILHGDVKADNVLLSSDGSHAALCDFGHAVCLQPDGLGKSLLTGDYIPGTETHMAPEVVLGRSCDAKVDVWSSCCMMLHMLNGCHPWTQFFRGPLCLKIASEPPPVREIPPSCAPLTAQAIQEGLRKEPIHRVSAAELGGKVNRALQQVGGLKSPWRGEYKEPRHPPPNQANYHQTLHAQPRELSPRAPGPRPAEETTGRAPKLQPPLPPEPPEPNKSPPLTLSKEESGMWEPLPLSSLEPAPARNPSSPERKATVPEQELQQLEIELFLNSLSQPFSLEEQEQILSCLSIDSLSLSDDSEKNPSKASQSSRDTLSSGVHSWSSQAEARSSSWNMVLARGRPTDTPSYFNGVKVQIQSLNGEHLHIREFHRVKVGDIATGISSQIPAAAFSLVTKDGQPVRYDMEVPDSGIDLQCTLAPDGSFAWSWRVKHGQLENRP.

Disordered regions lie at residues 1 to 37 (MAVMEMACPGAPGSAVGQQKELPKAKEKTPPLGKKQS) and 135 to 171 (KGKRRSKARKKRKKKSSKSLAHAGVALAKPLPRTPEQ). Positions 135 to 151 (KGKRRSKARKKRKKKSS) are enriched in basic residues. A Protein kinase domain is found at 400-655 (ATHQLRLGRG…ELGGKVNRAL (256 aa)). Residues 401–653 (THQLRLGRGS…AAELGGKVNR (253 aa)) form an interaction with ZFP91 region. ATP is bound by residues 406 to 414 (LGRGSFGEV) and Lys429. The Proton acceptor role is filled by Asp515. Thr559 carries the phosphothreonine modification. 2 disordered regions span residues 662-766 (KSPW…ATVP) and 805-830 (LSDDSEKNPSKASQSSRDTLSSGVHS). Residues 665–674 (WRGEYKEPRH) show a composition bias toward basic and acidic residues. The segment covering 713-727 (LQPPLPPEPPEPNKS) has biased composition (pro residues). Over residues 741 to 752 (EPLPLSSLEPAP) the composition is skewed to low complexity. The segment covering 814-829 (SKASQSSRDTLSSGVH) has biased composition (polar residues).

Belongs to the protein kinase superfamily. STE Ser/Thr protein kinase family. MAP kinase kinase kinase subfamily. Interacts with TRAF2, TRAF5, TRAF6, IKKA and NFKB2/P100. Interacts with TRAF3 and PELI3. Interacts with NIBP; the interaction is direct. Interacts with ARRB1 and ARRB2. Interacts with GRB10. Interacts with ZFP91. Interacts with NLRP12; this interaction promotes proteasomal degradation of MAP3K14. Directly interacts with DDX3X. Interacts (via C-terminus and kinase domain) with PPPC3A (via N-terminus) and PPP3CB. In terms of processing, autophosphorylated. Phosphorylation at Thr-559 is required to activate its kinase activity and 'Lys-63'-linked polyubiquitination. Phosphorylated by CHUK/IKKA leading to MAP3K14 destabilization. Post-translationally, ubiquitinated. Undergoes both 'Lys-48'- and 'Lys-63'-linked polyubiquitination. 'Lys-48'-linked polyubiquitination leads to its degradation by the proteasome, while 'Lys-63'-linked polyubiquitination stabilizes and activates it. In terms of tissue distribution, weakly expressed in testis, small intestine, spleen, thymus, peripheral blood leukocytes, prostate, ovary and colon.

Its subcellular location is the cytoplasm. It catalyses the reaction L-seryl-[protein] + ATP = O-phospho-L-seryl-[protein] + ADP + H(+). The enzyme catalyses L-threonyl-[protein] + ATP = O-phospho-L-threonyl-[protein] + ADP + H(+). Functionally, lymphotoxin beta-activated kinase which seems to be exclusively involved in the activation of NF-kappa-B and its transcriptional activity. Phosphorylates CHUK/IKKA, thereby promoting proteolytic processing of NFKB2/P100, which leads to NF-kappa-B activation via the non-canonical pathway. Has an essential role in the non-canonical NF-kappa-B signaling that regulates genes encoding molecules involved in B-cell survival, lymphoid organogenesis, and immune response. Could act in a receptor-selective manner. The polypeptide is Mitogen-activated protein kinase kinase kinase 14 (Homo sapiens (Human)).